The following is a 1230-amino-acid chain: ATP-dependent helicase/nuclease subunit A (1230 aa).

Residues 4-480 (RNWTGPQEAA…IDLSHNFRSR (477 aa)) enclose the UvrD-like helicase ATP-binding domain. 25 to 32 (AGAGSGKT) contributes to the ATP binding site. In terms of domain architecture, UvrD-like helicase C-terminal spans 517-799 (AQLEGSGPPV…RIMSIHQAKG (283 aa)). The disordered stretch occupies residues 535–554 (TSVGRDTAGTADDEPDRSDE). Over residues 545-554 (ADDEPDRSDE) the composition is skewed to acidic residues.

It belongs to the helicase family. AddA subfamily. As to quaternary structure, heterodimer of AddA and AddB/RexB. Mg(2+) is required as a cofactor.

It carries out the reaction Couples ATP hydrolysis with the unwinding of duplex DNA by translocating in the 3'-5' direction.. The catalysed reaction is ATP + H2O = ADP + phosphate + H(+). In terms of biological role, the heterodimer acts as both an ATP-dependent DNA helicase and an ATP-dependent, dual-direction single-stranded exonuclease. Recognizes the chi site generating a DNA molecule suitable for the initiation of homologous recombination. The AddA nuclease domain is required for chi fragment generation; this subunit has the helicase and 3' -&gt; 5' nuclease activities. The sequence is that of ATP-dependent helicase/nuclease subunit A from Desulforudis audaxviator (strain MP104C).